The sequence spans 341 residues: Glycerol-3-phosphate dehydrogenase [NAD(P)+] (341 aa).

Positions 15, 16, 36, and 110 each coordinate NADPH. Residues Lys-110, Gly-139, and Ser-141 each coordinate sn-glycerol 3-phosphate. Ala-143 lines the NADPH pocket. Sn-glycerol 3-phosphate contacts are provided by Lys-194, Asp-247, Ser-257, Arg-258, and Asn-259. Catalysis depends on Lys-194, which acts as the Proton acceptor. Arg-258 serves as a coordination point for NADPH. NADPH is bound by residues Val-282 and Glu-284.

It belongs to the NAD-dependent glycerol-3-phosphate dehydrogenase family.

The protein resides in the cytoplasm. The enzyme catalyses sn-glycerol 3-phosphate + NAD(+) = dihydroxyacetone phosphate + NADH + H(+). It catalyses the reaction sn-glycerol 3-phosphate + NADP(+) = dihydroxyacetone phosphate + NADPH + H(+). It participates in membrane lipid metabolism; glycerophospholipid metabolism. In terms of biological role, catalyzes the reduction of the glycolytic intermediate dihydroxyacetone phosphate (DHAP) to sn-glycerol 3-phosphate (G3P), the key precursor for phospholipid synthesis. The sequence is that of Glycerol-3-phosphate dehydrogenase [NAD(P)+] from Xanthomonas oryzae pv. oryzae (strain MAFF 311018).